The sequence spans 226 residues: 7-cyano-7-deazaguanine synthase (226 aa).

Phenylalanine 10 to alanine 20 contributes to the ATP binding site. Zn(2+) contacts are provided by cysteine 190, cysteine 205, cysteine 208, and cysteine 211.

This sequence belongs to the QueC family. Zn(2+) serves as cofactor.

The catalysed reaction is 7-carboxy-7-deazaguanine + NH4(+) + ATP = 7-cyano-7-deazaguanine + ADP + phosphate + H2O + H(+). It functions in the pathway purine metabolism; 7-cyano-7-deazaguanine biosynthesis. In terms of biological role, catalyzes the ATP-dependent conversion of 7-carboxy-7-deazaguanine (CDG) to 7-cyano-7-deazaguanine (preQ(0)). In Helicobacter pylori (strain ATCC 700392 / 26695) (Campylobacter pylori), this protein is 7-cyano-7-deazaguanine synthase.